Consider the following 96-residue polypeptide: ATP synthase subunit f, mitochondrial (96 aa).

This sequence belongs to the ATPase F chain family.

It localises to the mitochondrion. The protein resides in the mitochondrion inner membrane. Functionally, mitochondrial membrane ATP synthase (F(1)F(0) ATP synthase or Complex V) produces ATP from ADP in the presence of a proton gradient across the membrane which is generated by electron transport complexes of the respiratory chain. F-type ATPases consist of two structural domains, F(1) - containing the extramembraneous catalytic core and F(0) - containing the membrane proton channel, linked together by a central stalk and a peripheral stalk. During catalysis, ATP synthesis in the catalytic domain of F(1) is coupled via a rotary mechanism of the central stalk subunits to proton translocation. This chain is ATP synthase subunit f, mitochondrial (atp17), found in Schizosaccharomyces pombe (strain 972 / ATCC 24843) (Fission yeast).